Consider the following 646-residue polypeptide: Protein kinase YegI (646 aa).

In terms of domain architecture, Protein kinase spans 13 to 300; sequence VTPGRELGKG…KAWVAALDLL (288 aa). Residues 19 to 27 and Lys-39 contribute to the ATP site; that span reads LGKGGEGAV. Asp-141 acts as the Proton acceptor in catalysis.

In terms of processing, autophosphorylated.

Functionally, probable serine/threonine kinase. The chain is Protein kinase YegI (yegI) from Escherichia coli O157:H7.